Reading from the N-terminus, the 161-residue chain is Phosphopantetheine adenylyltransferase (161 aa).

Serine 11 is a binding site for substrate. Residues 11–12 and histidine 19 contribute to the ATP site; that span reads SF. 3 residues coordinate substrate: lysine 43, leucine 75, and arginine 89. ATP is bound by residues 90 to 92, glutamate 100, and 125 to 131; these read GLR and YSFISSS.

This sequence belongs to the bacterial CoaD family. Homohexamer. Requires Mg(2+) as cofactor.

Its subcellular location is the cytoplasm. The enzyme catalyses (R)-4'-phosphopantetheine + ATP + H(+) = 3'-dephospho-CoA + diphosphate. It functions in the pathway cofactor biosynthesis; coenzyme A biosynthesis; CoA from (R)-pantothenate: step 4/5. Functionally, reversibly transfers an adenylyl group from ATP to 4'-phosphopantetheine, yielding dephospho-CoA (dPCoA) and pyrophosphate. The polypeptide is Phosphopantetheine adenylyltransferase (Staphylococcus carnosus (strain TM300)).